Here is a 424-residue protein sequence, read N- to C-terminus: Glutamyl-tRNA reductase (424 aa).

Residues 51–54 (TCNR), S99, 104–106 (EDQ), and Q110 each bind substrate. Residue C52 is the Nucleophile of the active site. Residue 179–184 (GGGEMG) participates in NADP(+) binding.

This sequence belongs to the glutamyl-tRNA reductase family. As to quaternary structure, homodimer.

The enzyme catalyses (S)-4-amino-5-oxopentanoate + tRNA(Glu) + NADP(+) = L-glutamyl-tRNA(Glu) + NADPH + H(+). It participates in porphyrin-containing compound metabolism; protoporphyrin-IX biosynthesis; 5-aminolevulinate from L-glutamyl-tRNA(Glu): step 1/2. Functionally, catalyzes the NADPH-dependent reduction of glutamyl-tRNA(Glu) to glutamate 1-semialdehyde (GSA). The polypeptide is Glutamyl-tRNA reductase (Methanocorpusculum labreanum (strain ATCC 43576 / DSM 4855 / Z)).